Here is a 1091-residue protein sequence, read N- to C-terminus: ATP-dependent RNA helicase ddx54 (1091 aa).

Disordered regions lie at residues Met-1–Phe-63 and Asp-150–Gly-231. Basic and acidic residues predominate over residues Met-26 to Ser-35. Positions Asp-150–Phe-161 are enriched in polar residues. The segment covering Lys-196–Glu-207 has biased composition (basic and acidic residues). The short motif at Gly-230–Arg-258 is the Q motif element. In terms of domain architecture, Helicase ATP-binding spans Ile-261–Ile-433. Ala-274 to Thr-281 contributes to the ATP binding site. A DEAD box motif is present at residues Asp-381–Asp-384. A Helicase C-terminal domain is found at Thr-478–Asn-632. Disordered stretches follow at residues Glu-801–Asn-896 and Lys-933–Lys-1091. Basic and acidic residues predominate over residues Asp-814–Glu-823. Residues Asn-824–Glu-855 are compositionally biased toward acidic residues. Composition is skewed to basic and acidic residues over residues Glu-865–Lys-874, Asp-944–Lys-975, and Gln-1008–Ala-1019. Residues Ser-1020–Lys-1029 are compositionally biased toward basic residues. A compositionally biased stretch (basic and acidic residues) spans Arg-1031–Met-1052. Residues Ser-1068–Phe-1079 are compositionally biased toward gly residues.

Belongs to the DEAD box helicase family. DDX54/DBP10 subfamily.

It localises to the nucleus. Its subcellular location is the nucleolus. The catalysed reaction is ATP + H2O = ADP + phosphate + H(+). ATP-binding RNA helicase which may be involved in the ribosome biogenesis. The polypeptide is ATP-dependent RNA helicase ddx54 (helA) (Dictyostelium discoideum (Social amoeba)).